A 166-amino-acid polypeptide reads, in one-letter code: ATP synthase subunit b 1 (166 aa).

Residues 7 to 29 (FWTALAFVLFFVIFGRKLWVAIT) traverse the membrane as a helical segment.

This sequence belongs to the ATPase B chain family. As to quaternary structure, F-type ATPases have 2 components, F(1) - the catalytic core - and F(0) - the membrane proton channel. F(1) has five subunits: alpha(3), beta(3), gamma(1), delta(1), epsilon(1). F(0) has three main subunits: a(1), b(2) and c(10-14). The alpha and beta chains form an alternating ring which encloses part of the gamma chain. F(1) is attached to F(0) by a central stalk formed by the gamma and epsilon chains, while a peripheral stalk is formed by the delta and b chains.

It localises to the cell inner membrane. Its function is as follows. F(1)F(0) ATP synthase produces ATP from ADP in the presence of a proton or sodium gradient. F-type ATPases consist of two structural domains, F(1) containing the extramembraneous catalytic core and F(0) containing the membrane proton channel, linked together by a central stalk and a peripheral stalk. During catalysis, ATP synthesis in the catalytic domain of F(1) is coupled via a rotary mechanism of the central stalk subunits to proton translocation. Component of the F(0) channel, it forms part of the peripheral stalk, linking F(1) to F(0). In Gluconobacter oxydans (strain 621H) (Gluconobacter suboxydans), this protein is ATP synthase subunit b 1.